Here is a 264-residue protein sequence, read N- to C-terminus: Tritrans,polycis-undecaprenyl-diphosphate synthase (geranylgeranyl-diphosphate specific) (264 aa).

Residue aspartate 43 is part of the active site. A Mg(2+)-binding site is contributed by aspartate 43. Residues 44–47, tryptophan 48, histidine 60, and 88–90 each bind substrate; these read GNRR and STE. Asparagine 91 acts as the Proton acceptor in catalysis. Substrate-binding positions include phenylalanine 92, arginine 94, arginine 213, and 219–221; that span reads RIS. Residue glutamate 232 participates in Mg(2+) binding.

It belongs to the UPP synthase family. As to quaternary structure, homodimer. Mg(2+) serves as cofactor.

It carries out the reaction geranylgeranyl diphosphate + 7 isopentenyl diphosphate = tri-trans,hepta-cis-undecaprenyl diphosphate + 7 diphosphate. Its function is as follows. Catalyzes the sequential condensation of isopentenyl diphosphate (IPP) with geranylgeranyl diphosphate (GGPP) to yield (2Z,6Z,10Z,14Z,18Z,22Z,26Z,30E,34E,38E)-undecaprenyl diphosphate (tritrans,heptacis-UPP). It is probably the precursor of glycosyl carrier lipids. The protein is Tritrans,polycis-undecaprenyl-diphosphate synthase (geranylgeranyl-diphosphate specific) of Pyrococcus horikoshii (strain ATCC 700860 / DSM 12428 / JCM 9974 / NBRC 100139 / OT-3).